Reading from the N-terminus, the 166-residue chain is Peptidyl-prolyl cis-trans isomerase-like 1 (166 aa).

Residues 10–164 enclose the PPIase cyclophilin-type domain; the sequence is QPPNVYLETS…DDVKIIKAYP (155 aa). Cyclosporin A-binding positions include 54–65, 70–71, 99–104, 109–113, T119, and K125; these read HRIIKDFMIQGG, TG, AMANAG, and GSQFF. Position 149 is a phosphoserine (S149).

The protein belongs to the cyclophilin-type PPIase family. PPIL1 subfamily. Identified in the spliceosome C complex. Interacts with SNW1/SKIP. Interacts with CDC40/PRP17; this interaction leads to CDC40 isomerization. Interacts with RBM22.

Its subcellular location is the nucleus. It catalyses the reaction [protein]-peptidylproline (omega=180) = [protein]-peptidylproline (omega=0). With respect to regulation, inhibited by Cyclosporin A. In terms of biological role, involved in pre-mRNA splicing as component of the spliceosome. PPIases accelerate the folding of proteins. It catalyzes the cis-trans isomerization of proline imidic peptide bonds in oligopeptides. Catalyzes prolyl peptide bond isomerization in CDC40/PRP17. Plays an important role in embryonic brain development; this function is independent of its isomerase activity. This Bos taurus (Bovine) protein is Peptidyl-prolyl cis-trans isomerase-like 1 (PPIL1).